Here is a 513-residue protein sequence, read N- to C-terminus: Protein PNS1 (513 aa).

Residues 1 to 13 (MSNNNYPPPPNPP) show a composition bias toward pro residues. The segment at 1 to 41 (MSNNNYPPPPNPPNYQGEEQVHNVQPDLENNQEKYYAEQPQ) is disordered. The Cytoplasmic segment spans residues 1–60 (MSNNNYPPPPNPPNYQGEEQVHNVQPDLENNQEKYYAEQPQPSQQFEESFKIDKPKWNDW). Residues 61 to 81 (PFTVFFLLTVAGFIAIAGITL) traverse the membrane as a helical segment. Residues 82–108 (NALKKTYGLQGSSIYNSTDTFTLNTNT) are Extracellular-facing. A glycan (N-linked (GlcNAc...) asparagine) is linked at asparagine 97. A helical membrane pass occupies residues 109 to 129 (IILFGFIIVVGVVLSVLIIVY). The Cytoplasmic portion of the chain corresponds to 130-136 (ARMAPRV). A helical transmembrane segment spans residues 137 to 157 (FITTGLILNIILGLGTCIYYF). The Extracellular portion of the chain corresponds to 158 to 163 (VAHYYS). Residues 164 to 182 (AAIVFLVFTLFTAWCYWSC) form a helical membrane-spanning segment. Residues 183–210 (RHRIPFSATVLEITIDVMKRYPSTLITS) lie on the Cytoplasmic side of the membrane. The helical transmembrane segment at 211 to 231 (FIGIIVSGLFSTLFSVVIVAT) threads the bilayer. Residues 232-251 (YVKYDPDSQGCDVAGGGCSQ) lie on the Extracellular side of the membrane. A helical membrane pass occupies residues 252-272 (SKLIGVLVFVFFAGYYISEVI). Residues 273–309 (KNVIHITIAGIYGTWYYLSNSDQGEPKHPALGAFKRA) are Cytoplasmic-facing. Residues 310-330 (MTYCFGSVCFGSLIVSIIQLI) form a helical membrane-spanning segment. Topologically, residues 331–346 (RSFVQILKQNAFGSGD) are extracellular. Residues 347 to 367 (NCAGCGFLILDFVLGFIDWIV) traverse the membrane as a helical segment. Topologically, residues 368-412 (RYFNHYAYCYVALYGKSYLKSARDTFDLIRFKGMDALINDCFINT) are cytoplasmic. The chain crosses the membrane as a helical span at residues 413 to 433 (SLNLYSMFVGYVVALLAYFYL). Residues 434-460 (KFTDPAYNSSGTFYAPVVAFSFLISGQ) are Extracellular-facing. The N-linked (GlcNAc...) asparagine glycan is linked to asparagine 441. Residues 461–481 (ITRIALTVISSGISTFFVALA) form a helical membrane-spanning segment. Over 482–513 (KDPEVFQMTNRDRFDEIFRNYPQVLQKITSDH) the chain is Cytoplasmic.

The protein belongs to the CTL (choline transporter-like) family.

It localises to the cell membrane. Functionally, probably involved in transport through the plasma membrane. The polypeptide is Protein PNS1 (PNS1) (Debaryomyces hansenii (strain ATCC 36239 / CBS 767 / BCRC 21394 / JCM 1990 / NBRC 0083 / IGC 2968) (Yeast)).